We begin with the raw amino-acid sequence, 110 residues long: UPF0145 protein LMOf2365_0219 (110 aa).

Belongs to the UPF0145 family.

The sequence is that of UPF0145 protein LMOf2365_0219 from Listeria monocytogenes serotype 4b (strain F2365).